A 547-amino-acid polypeptide reads, in one-letter code: Chaperonin GroEL (547 aa).

ATP contacts are provided by residues threonine 30 to proline 33, lysine 51, aspartate 87 to threonine 91, glycine 415, and aspartate 495. A disordered region spans residues lysine 526–phenylalanine 547. Over residues glycine 536–phenylalanine 547 the composition is skewed to gly residues.

It belongs to the chaperonin (HSP60) family. Forms a cylinder of 14 subunits composed of two heptameric rings stacked back-to-back. Interacts with the co-chaperonin GroES.

The protein localises to the cytoplasm. It catalyses the reaction ATP + H2O + a folded polypeptide = ADP + phosphate + an unfolded polypeptide.. In terms of biological role, together with its co-chaperonin GroES, plays an essential role in assisting protein folding. The GroEL-GroES system forms a nano-cage that allows encapsulation of the non-native substrate proteins and provides a physical environment optimized to promote and accelerate protein folding. The sequence is that of Chaperonin GroEL from Bartonella henselae (strain ATCC 49882 / DSM 28221 / CCUG 30454 / Houston 1) (Rochalimaea henselae).